A 237-amino-acid polypeptide reads, in one-letter code: Fibroblast growth factor 3 (237 aa).

Positions 1-21 (MVIIWILLLSFISCGPQVSWA) are cleaved as a signal peptide. The N-linked (GlcNAc...) asparagine glycan is linked to asparagine 83.

The protein belongs to the heparin-binding growth factors family.

Functionally, plays an important role in the regulation of embryonic development, cell proliferation, and cell differentiation. This Xenopus laevis (African clawed frog) protein is Fibroblast growth factor 3 (fgf3).